Here is a 393-residue protein sequence, read N- to C-terminus: Flap endonuclease 1 (393 aa).

The segment at methionine 1–alanine 108 is N-domain. Aspartate 34 provides a ligand contact to Mg(2+). Arginine 74 serves as a coordination point for DNA. Aspartate 90 contributes to the Mg(2+) binding site. The span at serine 99 to glutamate 120 shows a compositional bias: basic and acidic residues. The segment at serine 99–methionine 127 is disordered. Residues alanine 126 to tyrosine 257 are I-domain. Residues glutamate 162, glutamate 164, aspartate 183, and aspartate 185 each contribute to the Mg(2+) site. Glutamate 162 contacts DNA. Positions 235 and 237 each coordinate DNA. Residue aspartate 237 coordinates Mg(2+). Residues threonine 340–phenylalanine 348 form an interaction with PCNA region. Residues asparagine 358 to lysine 393 are disordered. Over residues serine 384–lysine 393 the composition is skewed to basic residues.

It belongs to the XPG/RAD2 endonuclease family. FEN1 subfamily. Interacts with PCNA. Three molecules of FEN1 bind to one PCNA trimer with each molecule binding to one PCNA monomer. PCNA stimulates the nuclease activity without altering cleavage specificity. Mg(2+) serves as cofactor. In terms of processing, phosphorylated. Phosphorylation upon DNA damage induces relocalization to the nuclear plasma.

It localises to the nucleus. The protein resides in the nucleolus. The protein localises to the nucleoplasm. Its subcellular location is the mitochondrion. Structure-specific nuclease with 5'-flap endonuclease and 5'-3' exonuclease activities involved in DNA replication and repair. During DNA replication, cleaves the 5'-overhanging flap structure that is generated by displacement synthesis when DNA polymerase encounters the 5'-end of a downstream Okazaki fragment. It enters the flap from the 5'-end and then tracks to cleave the flap base, leaving a nick for ligation. Also involved in the long patch base excision repair (LP-BER) pathway, by cleaving within the apurinic/apyrimidinic (AP) site-terminated flap. Acts as a genome stabilization factor that prevents flaps from equilibrating into structures that lead to duplications and deletions. Also possesses 5'-3' exonuclease activity on nicked or gapped double-stranded DNA, and exhibits RNase H activity. Also involved in replication and repair of rDNA and in repairing mitochondrial DNA. In Trypanosoma brucei brucei (strain 927/4 GUTat10.1), this protein is Flap endonuclease 1.